The following is a 164-amino-acid chain: Sec-independent protein translocase protein TatB (164 aa).

Residues 1–21 (MIDIGLSKMALIGAVALIVIG) form a helical membrane-spanning segment. The interval 81 to 102 (ASEFQKDWESGTSDAAATGHDG) is disordered.

It belongs to the TatB family. In terms of assembly, the Tat system comprises two distinct complexes: a TatABC complex, containing multiple copies of TatA, TatB and TatC subunits, and a separate TatA complex, containing only TatA subunits. Substrates initially bind to the TatABC complex, which probably triggers association of the separate TatA complex to form the active translocon.

The protein resides in the cell inner membrane. Part of the twin-arginine translocation (Tat) system that transports large folded proteins containing a characteristic twin-arginine motif in their signal peptide across membranes. Together with TatC, TatB is part of a receptor directly interacting with Tat signal peptides. TatB may form an oligomeric binding site that transiently accommodates folded Tat precursor proteins before their translocation. The chain is Sec-independent protein translocase protein TatB from Paracidovorax citrulli (strain AAC00-1) (Acidovorax citrulli).